Reading from the N-terminus, the 894-residue chain is Alpha-actinin-2 (894 aa).

Residues 1–254 (MNQIEPGVQY…IMTYVSCFYH (254 aa)) form an actin-binding region. 2 consecutive Calponin-homology (CH) domains span residues 38-142 (KQQR…LRFA) and 151-257 (TSAK…HAFA). Residue Thr-237 is modified to Phosphothreonine. Spectrin repeat units lie at residues 281–391 (RLME…WLLN), 401–506 (HLAE…ALER), 516–627 (QLHL…SLQE), and 637–740 (RLRR…EVET). 2 EF-hand domains span residues 753–788 (EQMN…MGYD) and 789–824 (LGEA…ETAD). Ca(2+)-binding residues include Asp-766, Asn-770, Asp-777, Asp-802, Asn-804, and Thr-808.

Belongs to the alpha-actinin family. Homodimer; antiparallel. Also forms heterodimers with ACTN3. Interacts with ADAM12, MYOZ1, MYOZ2 and MYOZ3. Interacts via its C-terminal region with the LDB3 PDZ domain. Interacts with XIRP2. Interacts with DST (via N-terminus). Interacts with PARVB. Interacts with SYNPO2. In terms of processing, ubiquitinated by FBXL22, leading to proteasomal degradation.

Its subcellular location is the cytoplasm. The protein resides in the myofibril. It localises to the sarcomere. It is found in the z line. F-actin cross-linking protein which is thought to anchor actin to a variety of intracellular structures. This is a bundling protein. This chain is Alpha-actinin-2 (ACTN2), found in Bos taurus (Bovine).